Here is a 119-residue protein sequence, read N- to C-terminus: Protein TusC (119 aa).

This sequence belongs to the DsrF/TusC family. In terms of assembly, heterohexamer, formed by a dimer of trimers. The hexameric TusBCD complex contains 2 copies each of TusB, TusC and TusD. The TusBCD complex interacts with TusE.

It localises to the cytoplasm. In terms of biological role, part of a sulfur-relay system required for 2-thiolation of 5-methylaminomethyl-2-thiouridine (mnm(5)s(2)U) at tRNA wobble positions. This Photorhabdus laumondii subsp. laumondii (strain DSM 15139 / CIP 105565 / TT01) (Photorhabdus luminescens subsp. laumondii) protein is Protein TusC.